A 1003-amino-acid polypeptide reads, in one-letter code: Helicase-like transcription factor (1003 aa).

R27 carries the post-translational modification Omega-N-methylarginine. The tract at residues 38 to 287 (EFQDIIPPDD…FSVKERPENV (250 aa)) is DNA-binding. A Glycyl lysine isopeptide (Lys-Gly) (interchain with G-Cter in SUMO2) cross-link involves residue K112. Y195 carries the phosphotyrosine; by JAK2 modification. A Glycyl lysine isopeptide (Lys-Gly) (interchain with G-Cter in SUMO2) cross-link involves residue K211. Residue 294-301 (DDMGLGKT) coordinates ATP. The disordered stretch occupies residues 317-373 (PLLSKRGKKNHPGKEYKDETIKRRGSNMDKKEDGHSESSTCGEEPSISGTPEKSSCT). Over residues 328 to 352 (PGKEYKDETIKRRGSNMDKKEDGHS) the composition is skewed to basic and acidic residues. A compositionally biased stretch (polar residues) spans 353–373 (ESSTCGEEPSISGTPEKSSCT). Phosphoserine is present on residues S394, S395, and S397. The region spanning 433 to 600 (DSKFALTFFA…WSLLSFLKLK (168 aa)) is the Helicase ATP-binding domain. The DEGH box motif lies at 551–554 (DEGH). T730 carries the phosphothreonine modification. Residues 754–795 (CAICLDSLTFPVITHCAHVFCKPCICQVIHSEQPHAKCPLCR) form an RING-type zinc finger. A Helicase C-terminal domain is found at 831–990 (ALMHALIELR…TKKTDANDMK (160 aa)). The tract at residues 919–1003 (SRVFLMDPAW…INEIRTLIDL (85 aa)) is interaction with SP1 and SP3.

It belongs to the SNF2/RAD54 helicase family. RAD16 subfamily. In terms of assembly, interacts with SP1 and SP3 independently of DNA; the interaction with these transcriptional factors may be required for basal transcription of target genes. Interacts with EGR1; the interaction requires prior binding to DNA and represses c-Rel via a DNA looping mechanism. Interacts with GATA4. Interacts with PCNA; the interaction promotes polyubiquitination of PCNA through association with the UBE2B-RAD18 and UBE2V2-UBE2N ubiquitin ligase complexes. Interacts with RAD18, SHPRH, UBE2V2 and UBE2N. Expressed in brain, heart, kidney, liver, lung, pancreas, placenta and skeletal muscle.

It is found in the cytoplasm. It localises to the nucleus. Its subcellular location is the nucleolus. The protein resides in the nucleoplasm. The enzyme catalyses S-ubiquitinyl-[E2 ubiquitin-conjugating enzyme]-L-cysteine + [acceptor protein]-L-lysine = [E2 ubiquitin-conjugating enzyme]-L-cysteine + N(6)-ubiquitinyl-[acceptor protein]-L-lysine.. The protein operates within protein modification; protein ubiquitination. In terms of biological role, has both helicase and E3 ubiquitin ligase activities. Possesses intrinsic ATP-dependent nucleosome-remodeling activity. This activity may be required for transcriptional activation or repression of specific target promoters. These may include the SERPINE1, to which this protein can bind directly. Plays a role in error-free postreplication repair (PRR) of damaged DNA and maintains genomic stability through acting as a ubiquitin ligase for 'Lys-63'-linked polyubiquitination of chromatin-bound PCNA. The chain is Helicase-like transcription factor (Hltf) from Mus musculus (Mouse).